A 426-amino-acid chain; its full sequence is Glucose-6-phosphate isomerase (426 aa).

Glutamate 276 (proton donor) is an active-site residue. Catalysis depends on residues histidine 297 and lysine 413.

Belongs to the GPI family.

It localises to the cytoplasm. It carries out the reaction alpha-D-glucose 6-phosphate = beta-D-fructose 6-phosphate. Its pathway is carbohydrate biosynthesis; gluconeogenesis. The protein operates within carbohydrate degradation; glycolysis; D-glyceraldehyde 3-phosphate and glycerone phosphate from D-glucose: step 2/4. Its function is as follows. Catalyzes the reversible isomerization of glucose-6-phosphate to fructose-6-phosphate. The sequence is that of Glucose-6-phosphate isomerase from Mesoplasma florum (strain ATCC 33453 / NBRC 100688 / NCTC 11704 / L1) (Acholeplasma florum).